The following is a 651-amino-acid chain: Acetyl-coenzyme A synthetase (651 aa).

Residues 189 to 192 (RGGK), T311, and N335 each bind CoA. ATP contacts are provided by residues 387-389 (GEP), 411-416 (DTWWQT), D500, and R515. Position 523 (S523) interacts with CoA. R526 serves as a coordination point for ATP. Mg(2+)-binding residues include V537, H539, and V542. Residue R586 participates in CoA binding. K611 carries the post-translational modification N6-acetyllysine.

The protein belongs to the ATP-dependent AMP-binding enzyme family. Mg(2+) is required as a cofactor. In terms of processing, acetylated. Deacetylation by the SIR2-homolog deacetylase activates the enzyme.

The enzyme catalyses acetate + ATP + CoA = acetyl-CoA + AMP + diphosphate. Its function is as follows. Catalyzes the conversion of acetate into acetyl-CoA (AcCoA), an essential intermediate at the junction of anabolic and catabolic pathways. AcsA undergoes a two-step reaction. In the first half reaction, AcsA combines acetate with ATP to form acetyl-adenylate (AcAMP) intermediate. In the second half reaction, it can then transfer the acetyl group from AcAMP to the sulfhydryl group of CoA, forming the product AcCoA. The polypeptide is Acetyl-coenzyme A synthetase (Brucella anthropi (strain ATCC 49188 / DSM 6882 / CCUG 24695 / JCM 21032 / LMG 3331 / NBRC 15819 / NCTC 12168 / Alc 37) (Ochrobactrum anthropi)).